Reading from the N-terminus, the 469-residue chain is Protein DETOXIFICATION 18 (469 aa).

A run of 12 helical transmembrane segments spans residues 40-60 (LPMI…VMFA), 73-93 (LANS…SGAL), 121-141 (LVFT…FLLL), 152-172 (ALYM…QNIL), 183-203 (PLVL…YALV), 206-226 (AGLG…IAFV), 252-274 (HVVL…YWAF), 293-313 (LVAI…GLSA), 344-364 (VLAL…VGLF), 374-394 (FASL…QGVL), 406-426 (LATV…SVLC), and 438-458 (WIGL…MTIF).

Belongs to the multi antimicrobial extrusion (MATE) (TC 2.A.66.1) family.

Its subcellular location is the membrane. The chain is Protein DETOXIFICATION 18 from Arabidopsis thaliana (Mouse-ear cress).